Here is a 120-residue protein sequence, read N- to C-terminus: Adenosylhomocysteinase (120 aa).

Asparagine 34 provides a ligand contact to NAD(+).

This sequence belongs to the adenosylhomocysteinase family. The cofactor is NAD(+).

It localises to the cytoplasm. It carries out the reaction S-adenosyl-L-homocysteine + H2O = L-homocysteine + adenosine. It functions in the pathway amino-acid biosynthesis; L-homocysteine biosynthesis; L-homocysteine from S-adenosyl-L-homocysteine: step 1/1. Functionally, may play a key role in the regulation of the intracellular concentration of adenosylhomocysteine. The protein is Adenosylhomocysteinase (ahcY) of Streptomyces fradiae (Streptomyces roseoflavus).